We begin with the raw amino-acid sequence, 199 residues long: Protein OPI10 homolog (199 aa).

This sequence belongs to the OPI10 family.

This Aedes aegypti (Yellowfever mosquito) protein is Protein OPI10 homolog.